The sequence spans 338 residues: DNA-directed RNA polymerase subunit alpha (338 aa).

The tract at residues 1 to 225 (MLISQRPTLT…ELFGLARELN (225 aa)) is alpha N-terminal domain (alpha-NTD). An alpha C-terminal domain (alpha-CTD) region spans residues 242-338 (YIAAYSMPIE…YIDVEPEDAE (97 aa)). The segment at 314 to 338 (FDPSTLEGYDAETGGYIDVEPEDAE) is disordered.

It belongs to the RNA polymerase alpha chain family. Homodimer. The RNAP catalytic core consists of 2 alpha, 1 beta, 1 beta' and 1 omega subunit. When a sigma factor is associated with the core the holoenzyme is formed, which can initiate transcription.

The enzyme catalyses RNA(n) + a ribonucleoside 5'-triphosphate = RNA(n+1) + diphosphate. DNA-dependent RNA polymerase catalyzes the transcription of DNA into RNA using the four ribonucleoside triphosphates as substrates. The polypeptide is DNA-directed RNA polymerase subunit alpha (Corynebacterium efficiens (strain DSM 44549 / YS-314 / AJ 12310 / JCM 11189 / NBRC 100395)).